Here is a 273-residue protein sequence, read N- to C-terminus: uncharacterized protein (273 aa).

This is an uncharacterized protein from Acanthamoeba polyphaga mimivirus (APMV).